Consider the following 488-residue polypeptide: Cobyric acid synthase (488 aa).

The 189-residue stretch at 250 to 438 (DITIAIIRLP…LHGIFDNGSW (189 aa)) folds into the GATase cobBQ-type domain. C331 functions as the Nucleophile in the catalytic mechanism. The active site involves H430.

The protein belongs to the CobB/CobQ family. CobQ subfamily.

It functions in the pathway cofactor biosynthesis; adenosylcobalamin biosynthesis. Its function is as follows. Catalyzes amidations at positions B, D, E, and G on adenosylcobyrinic A,C-diamide. NH(2) groups are provided by glutamine, and one molecule of ATP is hydrogenolyzed for each amidation. This Trichodesmium erythraeum (strain IMS101) protein is Cobyric acid synthase.